A 291-amino-acid chain; its full sequence is Protease HtpX homolog (291 aa).

Helical transmembrane passes span 4–24 (VVLF…SARI) and 38–58 (MGML…ISLL). H144 contributes to the Zn(2+) binding site. The active site involves E145. H148 lines the Zn(2+) pocket. The next 2 membrane-spanning stretches (helical) occupy residues 152-172 (GDMV…IFLS) and 199-219 (ISSI…VMCF). A Zn(2+)-binding site is contributed by E224.

It belongs to the peptidase M48B family. Zn(2+) serves as cofactor.

The protein localises to the cell inner membrane. This is Protease HtpX homolog from Chlorobium limicola (strain DSM 245 / NBRC 103803 / 6330).